The chain runs to 160 residues: Large ribosomal subunit protein uL22c (160 aa).

The protein belongs to the universal ribosomal protein uL22 family. In terms of assembly, part of the 50S ribosomal subunit.

The protein resides in the plastid. Its subcellular location is the chloroplast. Functionally, this protein binds specifically to 23S rRNA. Its function is as follows. The globular domain of the protein is located near the polypeptide exit tunnel on the outside of the subunit, while an extended beta-hairpin is found that lines the wall of the exit tunnel in the center of the 70S ribosome. This Capsella bursa-pastoris (Shepherd's purse) protein is Large ribosomal subunit protein uL22c (rpl22).